A 964-amino-acid chain; its full sequence is Translation initiation factor IF-2 (964 aa).

The interval 26 to 375 (AAGVSKRSPE…QNNQHAFQAP (350 aa)) is disordered. Composition is skewed to basic and acidic residues over residues 49–60 (YLKRSHGAREDS), 91–103 (VRPDDAPRAEAPK), 118–154 (AKPEPKPEPKVEAKPEPKPEPKPEPKVEAKPEPKPEP), 174–206 (IAAREAEEKRQAAFRARQEALMREKIEREERRQ), 225–236 (PQREERRDDRRG), 243–252 (RGPRGNDNRG), and 328–339 (KGGERSWDDNKK). In terms of domain architecture, tr-type G spans 464–633 (PRSPVVTVMG…LLQAEVLELK (170 aa)). The tract at residues 473 to 480 (GHVDHGKT) is G1. 473–480 (GHVDHGKT) lines the GTP pocket. The tract at residues 498–502 (GITQH) is G2. The interval 519 to 522 (DTPG) is G3. Residues 519 to 523 (DTPGH) and 573 to 576 (NKID) contribute to the GTP site. The tract at residues 573-576 (NKID) is G4. The tract at residues 609 to 611 (SAK) is G5.

Belongs to the TRAFAC class translation factor GTPase superfamily. Classic translation factor GTPase family. IF-2 subfamily.

The protein localises to the cytoplasm. In terms of biological role, one of the essential components for the initiation of protein synthesis. Protects formylmethionyl-tRNA from spontaneous hydrolysis and promotes its binding to the 30S ribosomal subunits. Also involved in the hydrolysis of GTP during the formation of the 70S ribosomal complex. This Chromobacterium violaceum (strain ATCC 12472 / DSM 30191 / JCM 1249 / CCUG 213 / NBRC 12614 / NCIMB 9131 / NCTC 9757 / MK) protein is Translation initiation factor IF-2.